The sequence spans 132 residues: Small ribosomal subunit protein uS8 (132 aa).

The protein belongs to the universal ribosomal protein uS8 family. Part of the 30S ribosomal subunit. Contacts proteins S5 and S12.

Its function is as follows. One of the primary rRNA binding proteins, it binds directly to 16S rRNA central domain where it helps coordinate assembly of the platform of the 30S subunit. In Mycolicibacterium smegmatis (strain ATCC 700084 / mc(2)155) (Mycobacterium smegmatis), this protein is Small ribosomal subunit protein uS8.